The sequence spans 871 residues: Protein translocase subunit SecA (871 aa).

ATP is bound by residues Gln80, 98-102 (GEGKT), and Asp537.

The protein belongs to the SecA family. As to quaternary structure, monomer and homodimer. Part of the essential Sec protein translocation apparatus which comprises SecA, SecYEG and auxiliary proteins SecDF. Other proteins may also be involved.

Its subcellular location is the cell inner membrane. The protein resides in the cytoplasm. It catalyses the reaction ATP + H2O + cellular proteinSide 1 = ADP + phosphate + cellular proteinSide 2.. In terms of biological role, part of the Sec protein translocase complex. Interacts with the SecYEG preprotein conducting channel. Has a central role in coupling the hydrolysis of ATP to the transfer of proteins into and across the cell membrane, serving as an ATP-driven molecular motor driving the stepwise translocation of polypeptide chains across the membrane. In Thermotoga sp. (strain RQ2), this protein is Protein translocase subunit SecA.